The sequence spans 403 residues: MLSIKRTLLLLGAVLPAVFGAPVQETRRAAQKIPGKYIVTFKPGTDAATIESHTLWATDLHKRNLERRDATSGEPPIGIEKNYKIKDFAAYAGSFDDTTIEEIRKSADVAHVEEDQIWYIDALTTQKGAPWGLGSISHKGQASTDYIYDTSAGAGTYAYVVDTGINVNHVEFEGRASLAYNAAGGSHVDSVGHGTHVAGTIGGKTYGVAKKTNLLSVKVFQGESSSTSIILDGFNWAANDIVSKGRTRKAAINMSLGGGYSYAFNNAVENAFDEGVLSVVAAGNENTDASNTSPASAPNALTVAAINRSNARASFSNYGSVVDIFAPGQDILSAWIGSNTATNTISGTSMATPHIVGLSVYLMGLESLSGPAAVTSRIKQLATNGVVTNAQGSPNKLAYNGNA.

An N-terminal signal peptide occupies residues M1–A21. Positions P22–T125 are excised as a propeptide. The 85-residue stretch at K36–I120 folds into the Inhibitor I9 domain. Positions P130–A403 constitute a Peptidase S8 domain. Residues D162 and H193 each act as charge relay system in the active site. N-linked (GlcNAc...) asparagine glycosylation is found at N253 and N307. S349 functions as the Charge relay system in the catalytic mechanism.

It belongs to the peptidase S8 family.

Its subcellular location is the secreted. It catalyses the reaction Hydrolysis of proteins with broad specificity, and of Bz-Arg-OEt &gt; Ac-Tyr-OEt. Does not hydrolyze peptide amides.. In terms of biological role, secreted alkaline protease that allows assimilation of proteinaceous substrates. The protein is Alkaline protease 1 (alp1) of Neosartorya fischeri (strain ATCC 1020 / DSM 3700 / CBS 544.65 / FGSC A1164 / JCM 1740 / NRRL 181 / WB 181) (Aspergillus fischerianus).